The following is a 528-amino-acid chain: MAEHLELLAEMPMVGRMSTQERLKHAQKRRAQQVKMWAQAEKEAQGKKGPGERPRKEAASQGLLKQVLFPPSVVLLEAAARNDLEEVRQFLGSGVSPDLANEDGLTALHQCCIDDFREMVQQLLEAGANINACDSECWTPLHAAATCGHLHLVELLIASGANLLAVNTDGNMPYDLCDDEQTLDCLETAMADRGITQDSIEAARAVPELRMLDDIRSRLQAGADLHAPLDHGATLLHVAAANGFSEAAALLLEHRASLSAKDQDGWEPLHAAAYWGQVPLVELLVAHGADLNAKSLMDETPLDVCGDEEVRAKLLELKHKHDALLRAQSRQRSLLRRRTSSAGSRGKVVRRVSLTQRTDLYRKQHAQEAIVWQQPPPTSPEPPEDNDDRQTGAELRPPPPEEDNPEVVRPHNGRVGGSPVRHLYSKRLDRSVSYQLSPLDSTTPHTLVHDKAHHTLADLKRQRAAAKLQRPPPEGPESPETAEPGLPGDTVTPQPDCGFRAGGDPPLLKLTAPAVEAPVERRPCCLLM.

Residues 18–45 (STQERLKHAQKRRAQQVKMWAQAEKEAQ) adopt a coiled-coil conformation. Residues 19 to 59 (TQERLKHAQKRRAQQVKMWAQAEKEAQGKKGPGERPRKEAA) form a disordered region. A compositionally biased stretch (basic and acidic residues) spans 40-58 (AEKEAQGKKGPGERPRKEA). ANK repeat units lie at residues 70–99 (PPSV…SPDL), 103–132 (DGLT…NINA), 136–165 (ECWT…NLLA), 231–260 (HGAT…SLSA), and 264–293 (DGWE…DLNA). Disordered regions lie at residues 330–351 (RQRS…VVRR) and 367–421 (QEAI…SPVR). Ser433 carries the post-translational modification Phosphoserine. A disordered region spans residues 462–505 (QRAAAKLQRPPPEGPESPETAEPGLPGDTVTPQPDCGFRAGGDP). Cys524 is lipidated: S-palmitoyl cysteine. The residue at position 525 (Cys525) is a Cysteine methyl ester. Cys525 carries S-farnesyl cysteine lipidation. Residues 526-528 (LLM) constitute a propeptide, removed in mature form.

In terms of assembly, binds PP1.

It localises to the cell membrane. Functionally, inhibits protein phosphatase 1 activity toward phosphorylase, myosin light chain and myosin substrates. The sequence is that of Protein phosphatase 1 regulatory subunit 16A (PPP1R16A) from Homo sapiens (Human).